We begin with the raw amino-acid sequence, 390 residues long: MRFLTAGESHGPQLTAIIEGVPAQLPLLAEDIDRELARRQGGYGRGRRMQIEKDRVQIVSGVRHGMTTGAPITFVVENKDWKNWTKIMGAEPISEEEAEKMRRKLTRPRPGHADLNGAIKYGHRDMRNVLERSSARETTVRVACGALAKVILKACGIEVAGHVREIGGIRAEETNYATIQELQKRSEESPVRCLDEDASKKMMAAIDKAKQDGDSIGGIVEVVVAGVPIGLGSHVHYDRKLDGKIAGAVMSINAFKGVEIGIGFEAARLPGSQVHDEITWSEEEGYKRKTNRLGGFEGGMTNGMPIVVKGVMKPIPTLYKPLQSVDIDSKEPFAAGVERSDSCAVPAASVVCENVVAWEVANALLDTFGSDQLPLIQAAVERHHAASKEF.

2 residues coordinate NADP(+): R39 and R45. FMN contacts are provided by residues 132-134, 253-254, G298, 313-317, and R339; these read RSS, NA, and KPIPT.

It belongs to the chorismate synthase family. In terms of assembly, homotetramer. Requires FMNH2 as cofactor.

It carries out the reaction 5-O-(1-carboxyvinyl)-3-phosphoshikimate = chorismate + phosphate. It functions in the pathway metabolic intermediate biosynthesis; chorismate biosynthesis; chorismate from D-erythrose 4-phosphate and phosphoenolpyruvate: step 7/7. Its function is as follows. Catalyzes the anti-1,4-elimination of the C-3 phosphate and the C-6 proR hydrogen from 5-enolpyruvylshikimate-3-phosphate (EPSP) to yield chorismate, which is the branch point compound that serves as the starting substrate for the three terminal pathways of aromatic amino acid biosynthesis. This reaction introduces a second double bond into the aromatic ring system. This chain is Chorismate synthase, found in Shouchella clausii (strain KSM-K16) (Alkalihalobacillus clausii).